A 431-amino-acid polypeptide reads, in one-letter code: Glutamyl-tRNA(Gln) amidotransferase subunit A (431 aa).

Active-site charge relay system residues include Lys55 and Ser130. The Acyl-ester intermediate role is filled by Ser154.

Belongs to the amidase family. GatA subfamily. In terms of assembly, heterotrimer of A, B and C subunits.

It catalyses the reaction L-glutamyl-tRNA(Gln) + L-glutamine + ATP + H2O = L-glutaminyl-tRNA(Gln) + L-glutamate + ADP + phosphate + H(+). Its function is as follows. Allows the formation of correctly charged Gln-tRNA(Gln) through the transamidation of misacylated Glu-tRNA(Gln) in organisms which lack glutaminyl-tRNA synthetase. The reaction takes place in the presence of glutamine and ATP through an activated gamma-phospho-Glu-tRNA(Gln). This chain is Glutamyl-tRNA(Gln) amidotransferase subunit A, found in Methanococcus maripaludis (strain DSM 14266 / JCM 13030 / NBRC 101832 / S2 / LL).